We begin with the raw amino-acid sequence, 124 residues long: Protein TraJ (124 aa).

It localises to the cytoplasm. This protein is essential for positively regulating the expression of transfer genes that are involved in the conjugal transfer of DNA between bacterial cells. This is Protein TraJ (traJ) from Escherichia coli.